The sequence spans 396 residues: S-adenosylmethionine synthase 1 (396 aa).

Glu13 contacts Mg(2+). ATP is bound at residue His19. Residue Glu47 coordinates K(+). L-methionine-binding residues include Glu60 and Gln103. Residues 171-173 (DGK), 239-242 (SGRF), Asp250, 256-257 (RK), Ala273, Lys277, and Lys281 each bind ATP. Asp250 is an L-methionine binding site. Residue Lys281 coordinates L-methionine.

Belongs to the AdoMet synthase family. Homotetramer. It depends on Mn(2+) as a cofactor. The cofactor is Mg(2+). Requires Co(2+) as cofactor. K(+) is required as a cofactor.

It localises to the cytoplasm. The enzyme catalyses L-methionine + ATP + H2O = S-adenosyl-L-methionine + phosphate + diphosphate. It functions in the pathway amino-acid biosynthesis; S-adenosyl-L-methionine biosynthesis; S-adenosyl-L-methionine from L-methionine: step 1/1. Its function is as follows. Catalyzes the formation of S-adenosylmethionine from methionine and ATP. The reaction comprises two steps that are both catalyzed by the same enzyme: formation of S-adenosylmethionine (AdoMet) and triphosphate, and subsequent hydrolysis of the triphosphate. May be involved in the synthesis of betain in response to abiotic stress such as high salinity. This Beta vulgaris (Sugar beet) protein is S-adenosylmethionine synthase 1 (SAMS1).